The chain runs to 860 residues: Leucine--tRNA ligase (860 aa).

Positions 42-52 match the 'HIGH' region motif; the sequence is PYPSGRLHMGH. Residues 619–623 carry the 'KMSKS' region motif; the sequence is KMSKS. K622 provides a ligand contact to ATP.

Belongs to the class-I aminoacyl-tRNA synthetase family.

The protein localises to the cytoplasm. The catalysed reaction is tRNA(Leu) + L-leucine + ATP = L-leucyl-tRNA(Leu) + AMP + diphosphate. The protein is Leucine--tRNA ligase of Escherichia coli (strain ATCC 8739 / DSM 1576 / NBRC 3972 / NCIMB 8545 / WDCM 00012 / Crooks).